Here is a 1041-residue protein sequence, read N- to C-terminus: Desmoglein-4 (1041 aa).

The signal sequence occupies residues 1–23; that stretch reads MDWLLFRNICLLILFMVVLGVNS. Residues 24 to 49 constitute a propeptide that is removed on maturation; sequence EFIVEVKELDIENGTTTWQTVRRQKR. Cadherin domains lie at 50–157, 158–269, 270–385, and 389–497; these read EWIK…PPVF, TQNV…FPIL, EKTS…GPTF, and SMTF…CPVI. Over 50–634 the chain is Extracellular; sequence EWIKFAAACR…RQSNVGLGPA (585 aa). A glycan (N-linked (GlcNAc...) asparagine) is linked at Asn-110. Asn-545 carries N-linked (GlcNAc...) asparagine glycosylation. Residues 635-655 traverse the membrane as a helical segment; it reads GIGMIILGLLLLLLSPLLLLM. Topologically, residues 656–1041 are cytoplasmic; that stretch reads CCCKRRQPEG…RYSNMHYSRQ (386 aa). Desmoglein repeat repeat units lie at residues 884 to 910 and 911 to 941; these read TLSE…IVTE and TYTT…ETVM. The interval 1014–1041 is disordered; it reads ISQTTGSTSPMTSQHRVTRYSNMHYSRQ.

In terms of assembly, interacts with JUP. Strongly expressed in the skin; during the anagen stage of hair follicles in the matrix, precortex and inner rooth sheath.

The protein resides in the cell membrane. Its subcellular location is the cell junction. It localises to the desmosome. Functionally, a component of desmosome cell-cell junctions which are required for positive regulation of cellular adhesion. Coordinates the transition from proliferation to differentiation in hair follicle keratinocytes. Plays a role in moderating lymphocyte migration to inflamed skin and maintaining homeostasis of the epidermal inflammatory response. The sequence is that of Desmoglein-4 (Dsg4) from Mus musculus (Mouse).